Here is a 287-residue protein sequence, read N- to C-terminus: uncharacterized protein (287 aa).

Residues threonine 43 and tyrosine 104 each act as charge relay system in the active site. Tyrosine 130 acts as the Proton donor in catalysis. The active-site Schiff-base intermediate with substrate is lysine 158.

The protein belongs to the DapA family. As to quaternary structure, homotetramer.

The protein localises to the cytoplasm. This is an uncharacterized protein from Pyrococcus horikoshii (strain ATCC 700860 / DSM 12428 / JCM 9974 / NBRC 100139 / OT-3).